Consider the following 33-residue polypeptide: U23-ctenitoxin-Pn1a (33 aa).

Cystine bridges form between Cys3–Cys16, Cys10–Cys21, and Cys15–Cys30.

Expressed by the venom gland.

It is found in the secreted. Its function is as follows. Non-toxic to mice. In Phoneutria nigriventer (Brazilian armed spider), this protein is U23-ctenitoxin-Pn1a.